The sequence spans 294 residues: Glycine--tRNA ligase alpha subunit (294 aa).

This sequence belongs to the class-II aminoacyl-tRNA synthetase family. In terms of assembly, tetramer of two alpha and two beta subunits.

The protein localises to the cytoplasm. It carries out the reaction tRNA(Gly) + glycine + ATP = glycyl-tRNA(Gly) + AMP + diphosphate. The protein is Glycine--tRNA ligase alpha subunit of Trichormus variabilis (strain ATCC 29413 / PCC 7937) (Anabaena variabilis).